Reading from the N-terminus, the 639-residue chain is Polyphenol oxidase, chloroplastic (639 aa).

Residues 1-101 (MATLSSPTII…EGANYYNTLA (101 aa)) constitute a chloroplast transit peptide. Positions 35–58 (GVRSVNGKVSCQTKNNNGNDENNQ) are disordered. 2 disulfide bridges follow: Cys-111–Cys-127 and Cys-126–Cys-194. Positions 193, 214, 223, 354, 358, and 388 each coordinate Cu cation. A cross-link (2'-(S-cysteinyl)-histidine (Cys-His)) is located at residues 197 to 214 (CDGSYPVLGHNDTRLEVH).

Belongs to the tyrosinase family. The cofactor is Cu(2+).

It localises to the plastid. The protein localises to the chloroplast thylakoid lumen. The catalysed reaction is 2 catechol + O2 = 2 1,2-benzoquinone + 2 H2O. Functionally, catalyzes the oxidation of mono- and o-diphenols to o-diquinones. In Spinacia oleracea (Spinach), this protein is Polyphenol oxidase, chloroplastic.